The sequence spans 249 residues: 1-(5-phosphoribosyl)-5-[(5-phosphoribosylamino)methylideneamino] imidazole-4-carboxamide isomerase (249 aa).

The Proton acceptor role is filled by aspartate 11. The Proton donor role is filled by aspartate 133.

It belongs to the HisA/HisF family.

Its subcellular location is the cytoplasm. It carries out the reaction 1-(5-phospho-beta-D-ribosyl)-5-[(5-phospho-beta-D-ribosylamino)methylideneamino]imidazole-4-carboxamide = 5-[(5-phospho-1-deoxy-D-ribulos-1-ylimino)methylamino]-1-(5-phospho-beta-D-ribosyl)imidazole-4-carboxamide. It participates in amino-acid biosynthesis; L-histidine biosynthesis; L-histidine from 5-phospho-alpha-D-ribose 1-diphosphate: step 4/9. The chain is 1-(5-phosphoribosyl)-5-[(5-phosphoribosylamino)methylideneamino] imidazole-4-carboxamide isomerase from Actinobacillus succinogenes (strain ATCC 55618 / DSM 22257 / CCUG 43843 / 130Z).